We begin with the raw amino-acid sequence, 212 residues long: Imidazole glycerol phosphate synthase subunit HisH (212 aa).

Positions 1-210 (MIAVINYGAG…VRWSEAVQPK (210 aa)) constitute a Glutamine amidotransferase type-1 domain. C79 acts as the Nucleophile in catalysis. Active-site residues include H185 and E187.

As to quaternary structure, heterodimer of HisH and HisF.

It is found in the cytoplasm. The catalysed reaction is 5-[(5-phospho-1-deoxy-D-ribulos-1-ylimino)methylamino]-1-(5-phospho-beta-D-ribosyl)imidazole-4-carboxamide + L-glutamine = D-erythro-1-(imidazol-4-yl)glycerol 3-phosphate + 5-amino-1-(5-phospho-beta-D-ribosyl)imidazole-4-carboxamide + L-glutamate + H(+). It carries out the reaction L-glutamine + H2O = L-glutamate + NH4(+). It functions in the pathway amino-acid biosynthesis; L-histidine biosynthesis; L-histidine from 5-phospho-alpha-D-ribose 1-diphosphate: step 5/9. In terms of biological role, IGPS catalyzes the conversion of PRFAR and glutamine to IGP, AICAR and glutamate. The HisH subunit catalyzes the hydrolysis of glutamine to glutamate and ammonia as part of the synthesis of IGP and AICAR. The resulting ammonia molecule is channeled to the active site of HisF. This Chloroflexus aurantiacus (strain ATCC 29364 / DSM 637 / Y-400-fl) protein is Imidazole glycerol phosphate synthase subunit HisH.